A 53-amino-acid polypeptide reads, in one-letter code: Large ribosomal subunit protein bL33A (53 aa).

Belongs to the bacterial ribosomal protein bL33 family.

This chain is Large ribosomal subunit protein bL33A (rpmG1), found in Mycoplasma pneumoniae (strain ATCC 29342 / M129 / Subtype 1) (Mycoplasmoides pneumoniae).